Here is a 932-residue protein sequence, read N- to C-terminus: Protocadherin gamma-A7 (932 aa).

A signal peptide spans Met-1 to Ala-28. Cadherin domains follow at residues Gly-29–Phe-133, Leu-134–Phe-242, Ser-243–Val-347, Thr-348–Phe-452, Pro-453–Ile-562, and Asp-570–Asp-682. The Extracellular segment spans residues Gly-29–Tyr-692. N-linked (GlcNAc...) asparagine glycans are attached at residues Asn-419 and Asn-545. Residues Leu-693–Ala-713 form a helical membrane-spanning segment. At Leu-714–Lys-932 the chain is on the cytoplasmic side. Disordered regions lie at residues Val-804–Asn-841 and Ala-902–Lys-932. Polar residues predominate over residues Ser-806–Asn-841. A compositionally biased stretch (basic residues) spans Asn-922–Lys-932.

It localises to the cell membrane. Functionally, potential calcium-dependent cell-adhesion protein. May be involved in the establishment and maintenance of specific neuronal connections in the brain. In Pan troglodytes (Chimpanzee), this protein is Protocadherin gamma-A7 (PCDHGA7).